A 76-amino-acid polypeptide reads, in one-letter code: NADH-ubiquinone oxidoreductase chain 4L (76 aa).

The next 3 membrane-spanning stretches (helical) occupy residues 1-21, 29-49, and 56-76; these read MTPV…GLAF, ALLC…LWAL, and YSVA…AGLA.

The protein belongs to the complex I subunit 4L family.

It is found in the mitochondrion membrane. It catalyses the reaction a ubiquinone + NADH + 5 H(+)(in) = a ubiquinol + NAD(+) + 4 H(+)(out). Functionally, core subunit of the mitochondrial membrane respiratory chain NADH dehydrogenase (Complex I) which catalyzes electron transfer from NADH through the respiratory chain, using ubiquinone as an electron acceptor. Part of the enzyme membrane arm which is embedded in the lipid bilayer and involved in proton translocation. This chain is NADH-ubiquinone oxidoreductase chain 4L (MT-ND4L), found in Oncorhynchus masou (Cherry salmon).